Consider the following 482-residue polypeptide: ATP synthase subunit beta (482 aa).

167–174 contacts ATP; it reads GGAGVGKT.

Belongs to the ATPase alpha/beta chains family. As to quaternary structure, F-type ATPases have 2 components, CF(1) - the catalytic core - and CF(0) - the membrane proton channel. CF(1) has five subunits: alpha(3), beta(3), gamma(1), delta(1), epsilon(1). CF(0) has three main subunits: a(1), b(2) and c(9-12). The alpha and beta chains form an alternating ring which encloses part of the gamma chain. CF(1) is attached to CF(0) by a central stalk formed by the gamma and epsilon chains, while a peripheral stalk is formed by the delta and b chains.

It localises to the cell membrane. It carries out the reaction ATP + H2O + 4 H(+)(in) = ADP + phosphate + 5 H(+)(out). Its function is as follows. Produces ATP from ADP in the presence of a proton gradient across the membrane. The catalytic sites are hosted primarily by the beta subunits. This Corynebacterium aurimucosum (strain ATCC 700975 / DSM 44827 / CIP 107346 / CN-1) (Corynebacterium nigricans) protein is ATP synthase subunit beta.